We begin with the raw amino-acid sequence, 384 residues long: tRNA 2-selenouridine synthase (384 aa).

A Rhodanese domain is found at 15–138 (FVAGKPLIDL…MRQYLIGVIE (124 aa)). C98 acts as the S-selanylcysteine intermediate in catalysis.

The protein belongs to the SelU family. As to quaternary structure, monomer.

The catalysed reaction is 5-methylaminomethyl-2-thiouridine(34) in tRNA + selenophosphate + (2E)-geranyl diphosphate + H2O + H(+) = 5-methylaminomethyl-2-selenouridine(34) in tRNA + (2E)-thiogeraniol + phosphate + diphosphate. The enzyme catalyses 5-methylaminomethyl-2-thiouridine(34) in tRNA + (2E)-geranyl diphosphate = 5-methylaminomethyl-S-(2E)-geranyl-thiouridine(34) in tRNA + diphosphate. It catalyses the reaction 5-methylaminomethyl-S-(2E)-geranyl-thiouridine(34) in tRNA + selenophosphate + H(+) = 5-methylaminomethyl-2-(Se-phospho)selenouridine(34) in tRNA + (2E)-thiogeraniol. It carries out the reaction 5-methylaminomethyl-2-(Se-phospho)selenouridine(34) in tRNA + H2O = 5-methylaminomethyl-2-selenouridine(34) in tRNA + phosphate. Functionally, involved in the post-transcriptional modification of the uridine at the wobble position (U34) of tRNA(Lys), tRNA(Glu) and tRNA(Gln). Catalyzes the conversion of 2-thiouridine (S2U-RNA) to 2-selenouridine (Se2U-RNA). Acts in a two-step process involving geranylation of 2-thiouridine (S2U) to S-geranyl-2-thiouridine (geS2U) and subsequent selenation of the latter derivative to 2-selenouridine (Se2U) in the tRNA chain. The sequence is that of tRNA 2-selenouridine synthase from Shewanella sp. (strain MR-4).